Reading from the N-terminus, the 520-residue chain is GMP synthase [glutamine-hydrolyzing] (520 aa).

Residues Lys12–Asp205 enclose the Glutamine amidotransferase type-1 domain. Residue Cys89 is the Nucleophile of the active site. Catalysis depends on residues His179 and Glu181. The GMPS ATP-PPase domain occupies Trp206–Arg395. Ser233 to Ser239 serves as a coordination point for ATP.

In terms of assembly, homodimer.

It catalyses the reaction XMP + L-glutamine + ATP + H2O = GMP + L-glutamate + AMP + diphosphate + 2 H(+). It participates in purine metabolism; GMP biosynthesis; GMP from XMP (L-Gln route): step 1/1. In terms of biological role, catalyzes the synthesis of GMP from XMP. This Streptococcus pyogenes serotype M6 (strain ATCC BAA-946 / MGAS10394) protein is GMP synthase [glutamine-hydrolyzing].